The primary structure comprises 918 residues: Protein translocase subunit SecA (918 aa).

Residues glutamine 87, 105–109, and aspartate 516 contribute to the ATP site; that span reads GEGKT. 4 residues coordinate Zn(2+): cysteine 902, cysteine 904, cysteine 913, and histidine 914.

This sequence belongs to the SecA family. In terms of assembly, monomer and homodimer. Part of the essential Sec protein translocation apparatus which comprises SecA, SecYEG and auxiliary proteins SecDF-YajC and YidC. Zn(2+) serves as cofactor.

It is found in the cell inner membrane. Its subcellular location is the cytoplasm. The enzyme catalyses ATP + H2O + cellular proteinSide 1 = ADP + phosphate + cellular proteinSide 2.. Functionally, part of the Sec protein translocase complex. Interacts with the SecYEG preprotein conducting channel. Has a central role in coupling the hydrolysis of ATP to the transfer of proteins into and across the cell membrane, serving both as a receptor for the preprotein-SecB complex and as an ATP-driven molecular motor driving the stepwise translocation of polypeptide chains across the membrane. The protein is Protein translocase subunit SecA of Methylibium petroleiphilum (strain ATCC BAA-1232 / LMG 22953 / PM1).